The chain runs to 469 residues: RNA-editing ligase 1, mitochondrial (469 aa).

A mitochondrion-targeting transit peptide spans 1–44; that stretch reads MQLQRLGAPLLKRLVGGCIRQSTAPIMPCVVVSGSGGFLTPVRT. Residues 59 to 61, 86 to 92, Asn92, Arg111, Glu159, Phe209, and 307 to 309 contribute to the ATP site; these read IEI, EKVHGTN, and KLR. Lys87 functions as the N6-AMP-lysine intermediate in the catalytic mechanism. The tract at residues 450-469 is disordered; the sequence is AAAQSEAIPPLSPAAPTKGE.

This sequence belongs to the RNA ligase 2 family. As to quaternary structure, component of the RNA editing complex (editosome), a 1600 kDa complex composed of at least 20 proteins. Interacts with terminal uridylyltransferase MEAT1.

It localises to the mitochondrion. It carries out the reaction ATP + (ribonucleotide)n-3'-hydroxyl + 5'-phospho-(ribonucleotide)m = (ribonucleotide)n+m + AMP + diphosphate.. In terms of biological role, essential for RNA editing. RNA editing in kinetoplastid mitochondria inserts and deletes uridylates at multiple sites in pre-mRNAs as directed by guide RNAs. The protein is RNA-editing ligase 1, mitochondrial (REL1) of Trypanosoma brucei brucei (strain 927/4 GUTat10.1).